The following is a 113-amino-acid chain: Hydrogenase maturation factor HypA (113 aa).

Histidine 2 is a Ni(2+) binding site. Zn(2+) contacts are provided by cysteine 73, cysteine 76, cysteine 89, and cysteine 92.

It belongs to the HypA/HybF family.

Functionally, involved in the maturation of [NiFe] hydrogenases. Required for nickel insertion into the metal center of the hydrogenase. This Legionella pneumophila (strain Paris) protein is Hydrogenase maturation factor HypA.